The chain runs to 255 residues: MIRHKLQNFVNSLPISPERSCSYYPDRLSQIQYLPLQGKIEKDNLQFFFDSGFRRTGNILYRTSCNACRECLSYRVPLNQFVPSRNRKRLLKKNSDLVVRFGSPHLTVEKEILYLRYQRSRYQSFVIGESDQELLEGMRWNLFGYPENSLEMTLSLDEKILGFMILDSASDSLSAVYSVYDPDYPDRSLGSFAILYSILYAKELGMKYYHLGYFLPGHPDMDYKKHWVPSEIRELDTNDWIPFEEFQKKYADFSW.

It belongs to the R-transferase family. Bpt subfamily.

The protein localises to the cytoplasm. The catalysed reaction is N-terminal L-glutamyl-[protein] + L-leucyl-tRNA(Leu) = N-terminal L-leucyl-L-glutamyl-[protein] + tRNA(Leu) + H(+). It catalyses the reaction N-terminal L-aspartyl-[protein] + L-leucyl-tRNA(Leu) = N-terminal L-leucyl-L-aspartyl-[protein] + tRNA(Leu) + H(+). Functions in the N-end rule pathway of protein degradation where it conjugates Leu from its aminoacyl-tRNA to the N-termini of proteins containing an N-terminal aspartate or glutamate. The protein is Aspartate/glutamate leucyltransferase of Leptospira borgpetersenii serovar Hardjo-bovis (strain JB197).